Here is a 696-residue protein sequence, read N- to C-terminus: Glycine--tRNA ligase beta subunit (696 aa).

The protein belongs to the class-II aminoacyl-tRNA synthetase family. In terms of assembly, tetramer of two alpha and two beta subunits.

The protein resides in the cytoplasm. It carries out the reaction tRNA(Gly) + glycine + ATP = glycyl-tRNA(Gly) + AMP + diphosphate. This is Glycine--tRNA ligase beta subunit from Oleidesulfovibrio alaskensis (strain ATCC BAA-1058 / DSM 17464 / G20) (Desulfovibrio alaskensis).